The following is a 652-amino-acid chain: UvrABC system protein C (652 aa).

The region spanning 19-96 is the GIY-YIG domain; the sequence is KTSGVYLWKD…IKKHKPRYNI (78 aa). Residues 203-238 enclose the UVR domain; that stretch reads EDVSGTLKEKMKEAAEKKEFEKAARLRDGIQAVYAL.

Belongs to the UvrC family. Interacts with UvrB in an incision complex.

The protein localises to the cytoplasm. In terms of biological role, the UvrABC repair system catalyzes the recognition and processing of DNA lesions. UvrC both incises the 5' and 3' sides of the lesion. The N-terminal half is responsible for the 3' incision and the C-terminal half is responsible for the 5' incision. The sequence is that of UvrABC system protein C from Treponema denticola (strain ATCC 35405 / DSM 14222 / CIP 103919 / JCM 8153 / KCTC 15104).